The chain runs to 556 residues: Formate--tetrahydrofolate ligase (556 aa).

65–72 contacts ATP; that stretch reads TPAGEGKS.

The protein belongs to the formate--tetrahydrofolate ligase family.

The enzyme catalyses (6S)-5,6,7,8-tetrahydrofolate + formate + ATP = (6R)-10-formyltetrahydrofolate + ADP + phosphate. Its pathway is one-carbon metabolism; tetrahydrofolate interconversion. The sequence is that of Formate--tetrahydrofolate ligase from Streptococcus suis (strain 98HAH33).